The sequence spans 113 residues: Large ribosomal subunit protein bL19 (113 aa).

The protein belongs to the bacterial ribosomal protein bL19 family.

Its function is as follows. This protein is located at the 30S-50S ribosomal subunit interface and may play a role in the structure and function of the aminoacyl-tRNA binding site. This chain is Large ribosomal subunit protein bL19, found in Mycolicibacterium gilvum (strain PYR-GCK) (Mycobacterium gilvum (strain PYR-GCK)).